A 321-amino-acid chain; its full sequence is Lipoyl synthase (321 aa).

[4Fe-4S] cluster contacts are provided by Cys68, Cys73, Cys79, Cys94, Cys98, Cys101, and Ser308. In terms of domain architecture, Radical SAM core spans 80-297 (FNHGTATFMI…KVIALELGFT (218 aa)).

The protein belongs to the radical SAM superfamily. Lipoyl synthase family. The cofactor is [4Fe-4S] cluster.

It localises to the cytoplasm. The catalysed reaction is [[Fe-S] cluster scaffold protein carrying a second [4Fe-4S](2+) cluster] + N(6)-octanoyl-L-lysyl-[protein] + 2 oxidized [2Fe-2S]-[ferredoxin] + 2 S-adenosyl-L-methionine + 4 H(+) = [[Fe-S] cluster scaffold protein] + N(6)-[(R)-dihydrolipoyl]-L-lysyl-[protein] + 4 Fe(3+) + 2 hydrogen sulfide + 2 5'-deoxyadenosine + 2 L-methionine + 2 reduced [2Fe-2S]-[ferredoxin]. The protein operates within protein modification; protein lipoylation via endogenous pathway; protein N(6)-(lipoyl)lysine from octanoyl-[acyl-carrier-protein]: step 2/2. Functionally, catalyzes the radical-mediated insertion of two sulfur atoms into the C-6 and C-8 positions of the octanoyl moiety bound to the lipoyl domains of lipoate-dependent enzymes, thereby converting the octanoylated domains into lipoylated derivatives. The polypeptide is Lipoyl synthase (Aliivibrio salmonicida (strain LFI1238) (Vibrio salmonicida (strain LFI1238))).